Here is a 271-residue protein sequence, read N- to C-terminus: Elongation factor Ts (271 aa).

The interval 76–79 (TDFV) is involved in Mg(2+) ion dislocation from EF-Tu.

It belongs to the EF-Ts family.

The protein resides in the cytoplasm. Functionally, associates with the EF-Tu.GDP complex and induces the exchange of GDP to GTP. It remains bound to the aminoacyl-tRNA.EF-Tu.GTP complex up to the GTP hydrolysis stage on the ribosome. The polypeptide is Elongation factor Ts (Mycobacterium ulcerans (strain Agy99)).